The primary structure comprises 887 residues: Alanine--tRNA ligase (887 aa).

Residues His-564, His-568, Cys-676, and His-680 each coordinate Zn(2+).

The protein belongs to the class-II aminoacyl-tRNA synthetase family. Zn(2+) serves as cofactor.

The protein resides in the cytoplasm. It carries out the reaction tRNA(Ala) + L-alanine + ATP = L-alanyl-tRNA(Ala) + AMP + diphosphate. In terms of biological role, catalyzes the attachment of alanine to tRNA(Ala) in a two-step reaction: alanine is first activated by ATP to form Ala-AMP and then transferred to the acceptor end of tRNA(Ala). Also edits incorrectly charged Ser-tRNA(Ala) and Gly-tRNA(Ala) via its editing domain. The protein is Alanine--tRNA ligase of Rhizobium meliloti (strain 1021) (Ensifer meliloti).